The sequence spans 368 residues: S-adenosylmethionine:tRNA ribosyltransferase-isomerase (368 aa).

It belongs to the QueA family. In terms of assembly, monomer.

It is found in the cytoplasm. The catalysed reaction is 7-aminomethyl-7-carbaguanosine(34) in tRNA + S-adenosyl-L-methionine = epoxyqueuosine(34) in tRNA + adenine + L-methionine + 2 H(+). It participates in tRNA modification; tRNA-queuosine biosynthesis. Transfers and isomerizes the ribose moiety from AdoMet to the 7-aminomethyl group of 7-deazaguanine (preQ1-tRNA) to give epoxyqueuosine (oQ-tRNA). In Methylorubrum extorquens (strain CM4 / NCIMB 13688) (Methylobacterium extorquens), this protein is S-adenosylmethionine:tRNA ribosyltransferase-isomerase.